Consider the following 72-residue polypeptide: Small, acid-soluble spore protein 1 (72 aa).

Belongs to the alpha/beta-type SASP family.

SASP are bound to spore DNA. They are double-stranded DNA-binding proteins that cause DNA to change to an a-like conformation. They protect the DNA backbone from chemical and enzymatic cleavage and are thus involved in dormant spore's high resistance to UV light. In Halobacillus halophilus (strain ATCC 35676 / DSM 2266 / JCM 20832 / KCTC 3685 / LMG 17431 / NBRC 102448 / NCIMB 2269) (Sporosarcina halophila), this protein is Small, acid-soluble spore protein 1 (Sh-1).